Here is a 684-residue protein sequence, read N- to C-terminus: Leishmanolysin-like peptidase (684 aa).

Histidine 257 contacts Zn(2+). The active site involves glutamate 258. 2 residues coordinate Zn(2+): histidine 261 and histidine 364.

The protein belongs to the peptidase M8 family. The cofactor is Zn(2+).

Its subcellular location is the cytoplasm. Functionally, essential for the coordination of mitotic progression, and also plays a role in cell migration. The chain is Leishmanolysin-like peptidase from Drosophila pseudoobscura pseudoobscura (Fruit fly).